The chain runs to 630 residues: Pentatricopeptide repeat-containing protein At1g62670, mitochondrial (630 aa).

The transit peptide at 1–22 directs the protein to the mitochondrion; it reads MRISFAIASTAKRFVHRSLVVR. PPR repeat units lie at residues 44-79, 80-114, 115-149, 150-184, 185-219, 220-254, 255-289, 290-324, 325-359, 360-394, 395-429, 430-464, 465-499, 500-534, 535-569, and 570-604; these read TSYD…RPFP, SIIE…GIPH, NHYT…GYEP, NIVT…GYQP, NTVT…GCQP, DLVT…KLEP, GVLI…GIRP, NVVT…KINP, DVFT…SIDP, SIVT…HCFP, DVVT…GLVG, NTVT…GVPP, NIMT…KMEP, TIYT…GVKP, DVVA…GTLP, and NSGC…GFAG.

It belongs to the PPR family. P subfamily.

It localises to the mitochondrion. The polypeptide is Pentatricopeptide repeat-containing protein At1g62670, mitochondrial (Arabidopsis thaliana (Mouse-ear cress)).